Reading from the N-terminus, the 153-residue chain is Large ribosomal subunit protein bL9 (153 aa).

The protein belongs to the bacterial ribosomal protein bL9 family.

In terms of biological role, binds to the 23S rRNA. The sequence is that of Large ribosomal subunit protein bL9 from Gloeobacter violaceus (strain ATCC 29082 / PCC 7421).